Here is a 112-residue protein sequence, read N- to C-terminus: Putative pterin-4-alpha-carbinolamine dehydratase (112 aa).

It belongs to the pterin-4-alpha-carbinolamine dehydratase family.

It catalyses the reaction (4aS,6R)-4a-hydroxy-L-erythro-5,6,7,8-tetrahydrobiopterin = (6R)-L-erythro-6,7-dihydrobiopterin + H2O. This chain is Putative pterin-4-alpha-carbinolamine dehydratase, found in Shewanella sp. (strain MR-4).